Consider the following 524-residue polypeptide: Cytochrome P450 CYP749A22 (524 aa).

Residues 12 to 32 (TPILFQFLLSSLCVFLLFVFI) traverse the membrane as a helical segment. Heme is bound at residue Cys-472.

The protein belongs to the cytochrome P450 family. The cofactor is heme.

It is found in the membrane. Probable heme-thiolate monooxygenase. The protein is Cytochrome P450 CYP749A22 of Panax ginseng (Korean ginseng).